The chain runs to 225 residues: MLLHIPDILSADQVADFRRRLDAADWTDGRETVGHLGAQAKHNQQLPEASPLRRELGEIILVALARHPLFFSAALPLKYLPPRFNRYSGGGTYGFHVDGAVMNLANGEQLRSDISCTLFLSAPDEYEGGELIISDTYGEHEVKLPAGDLIVYPSSSLHQVRPVTAGARVASFFWVQSMVRDDVQRRLLWEMDGSIERLRQTGGDAEAVLQLTGVYHNLLRRWSEV.

A Fe2OG dioxygenase domain is found at Lys-78–Ser-177. Positions 96, 98, and 158 each coordinate Fe cation. Arg-168 lines the 2-oxoglutarate pocket.

Requires Fe(2+) as cofactor. L-ascorbate serves as cofactor.

This chain is PKHD-type hydroxylase Smal_0990, found in Stenotrophomonas maltophilia (strain R551-3).